A 211-amino-acid chain; its full sequence is Mediator of RNA polymerase II transcription subunit 20 (211 aa).

It belongs to the Mediator complex subunit 20 family. As to quaternary structure, component of the Mediator complex.

The protein resides in the nucleus. Component of the Mediator complex, a coactivator involved in the regulated transcription of nearly all RNA polymerase II-dependent genes. Mediator functions as a bridge to convey information from gene-specific regulatory proteins to the basal RNA polymerase II transcription machinery. Mediator is recruited to promoters by direct interactions with regulatory proteins and serves as a scaffold for the assembly of a functional preinitiation complex with RNA polymerase II and the general transcription factors. The protein is Mediator of RNA polymerase II transcription subunit 20 (SRB2) of Kluyveromyces lactis (strain ATCC 8585 / CBS 2359 / DSM 70799 / NBRC 1267 / NRRL Y-1140 / WM37) (Yeast).